The chain runs to 212 residues: Pyridoxine/pyridoxamine 5'-phosphate oxidase (212 aa).

Substrate contacts are provided by residues 8–11 (RREY) and K66. FMN contacts are provided by residues 61 to 66 (RIVLLK), 76 to 77 (FT), R82, K83, and Q105. Substrate is bound by residues Y123, R127, and S131. Residues 140–141 (QS) and W185 each bind FMN. 191–193 (RLH) contributes to the substrate binding site. R195 contacts FMN.

Belongs to the pyridoxamine 5'-phosphate oxidase family. In terms of assembly, homodimer. FMN serves as cofactor.

The catalysed reaction is pyridoxamine 5'-phosphate + O2 + H2O = pyridoxal 5'-phosphate + H2O2 + NH4(+). It catalyses the reaction pyridoxine 5'-phosphate + O2 = pyridoxal 5'-phosphate + H2O2. Its pathway is cofactor metabolism; pyridoxal 5'-phosphate salvage; pyridoxal 5'-phosphate from pyridoxamine 5'-phosphate: step 1/1. The protein operates within cofactor metabolism; pyridoxal 5'-phosphate salvage; pyridoxal 5'-phosphate from pyridoxine 5'-phosphate: step 1/1. Its function is as follows. Catalyzes the oxidation of either pyridoxine 5'-phosphate (PNP) or pyridoxamine 5'-phosphate (PMP) into pyridoxal 5'-phosphate (PLP). This is Pyridoxine/pyridoxamine 5'-phosphate oxidase from Shewanella putrefaciens (strain CN-32 / ATCC BAA-453).